Here is a 602-residue protein sequence, read N- to C-terminus: MSSDPMRNIRNFSIIAHVDHGKSTLADRIIQLCGGLEAREMEAQVLDSNPIERERGITIKAQSVSLLYKAQDGQNYHLNLIDTPGHVDFSYEVSRSLAACEGALLVVDASQGVEAQSVANCYTAVEQGLEVVPILNKIDLPTADTERAKAEIETVIGIDASEAVAVSAKTGLYVEQVLEAIVQRIPAPQPRDTEKLQALIIDSWFDNYLGVVSLVRVMQGEITPGNKLLVMSTGRSHQVDAVGVFTPKRKTLAKLTAGEVGWVTASIKDVHGAPVGDTLTLTSDPAPKPLPGFQEVQPRVFAGLFPVDAEDYPDLREALEKLRLNDAALRFEPENSEAMGFGFRCGFLGMLHMEIVQERLEREYDLNLITTAPTVIYEVLKNDGTLVAMDNPAKMPPINQINEIREPIIRSNILTPPDYVGAVITLCEEKRGSQISITYLGNQVQVAYELPMAEVVLDFFDKLKSVTRGYASLDYHFLRFQEGPFVRVDTLINGDRVDALSVIVHRHQAERRGRELCEKMKDLIPRQMFDVAIQAAIGSQIISRSTVKAMRKNVLAKCYGGDISRKKKLLEKQKEGKKRMKQIGRVEIPQEAFLAVLQIDNK.

A tr-type G domain is found at 7-189 (RNIRNFSIIA…AIVQRIPAPQ (183 aa)). Residues 19–24 (DHGKST) and 136–139 (NKID) each bind GTP.

The protein belongs to the TRAFAC class translation factor GTPase superfamily. Classic translation factor GTPase family. LepA subfamily.

The protein localises to the cell inner membrane. The enzyme catalyses GTP + H2O = GDP + phosphate + H(+). In terms of biological role, required for accurate and efficient protein synthesis under certain stress conditions. May act as a fidelity factor of the translation reaction, by catalyzing a one-codon backward translocation of tRNAs on improperly translocated ribosomes. Back-translocation proceeds from a post-translocation (POST) complex to a pre-translocation (PRE) complex, thus giving elongation factor G a second chance to translocate the tRNAs correctly. Binds to ribosomes in a GTP-dependent manner. The chain is Elongation factor 4 from Xylella fastidiosa (strain M23).